Here is a 389-residue protein sequence, read N- to C-terminus: Aspartic protease 6 (389 aa).

Residues 1 to 15 (MKTFILLAVLGLASA) form the signal peptide. One can recognise a Peptidase A1 domain in the interval 71-384 (YLGNITIGTP…DIGNKRMGFA (314 aa)). N-linked (GlcNAc...) asparagine glycosylation is present at N74. Residue D89 is part of the active site. C102 and C106 are oxidised to a cystine. D277 is a catalytic residue. An intrachain disulfide couples C312 to C344.

Belongs to the peptidase A1 family. In terms of processing, glycosylated. Has phosphorylcholine-substituted oligosaccharide N-glycans. As to expression, expressed in intestine, muscles, pharynx and hypodermis.

It is found in the secreted. In terms of biological role, aspartic protease. In Caenorhabditis elegans, this protein is Aspartic protease 6.